Reading from the N-terminus, the 414-residue chain is MRLDTRFLSGFPEALSRHGPLLEEARRRLLAKRGEPGSMLGWMDLPEDTETLREVRRYREANPWVEDFVLIGIGGSALGPKALEAAFNESGVRFHYLDHVEPEPTLRLLRTLDPRKTLVNAVSKSGSTAETLAGLAVFLKWLKAHLGEDWRRHLVVTTDPKEGPLRAFAEREGLKAFAIPKEVGGRFSALSPVGLLPLAFAGADLDALLMGARKANETALAPLEESLPLKTALLLHLHRHLPVHVFMVYSERLSHLPSWFVQLHDESLGKVDRQGQRVGTTAVPALGPKDQHAQVQLFREGPLDKLLALVIPEAPLEDVEIPEVGGLEAASYLFGKTLFQLLKAEAEATYEALAEAGQRVYALFLPEVSPYAVGWLMQHLMWQTAFLGELWEVNAFDQPGVELGKVLTRKRLAG.

Residue Glu266 is the Proton donor of the active site. Active-site residues include His292 and Lys405.

Belongs to the GPI family.

It localises to the cytoplasm. It carries out the reaction alpha-D-glucose 6-phosphate = beta-D-fructose 6-phosphate. Its pathway is carbohydrate biosynthesis; gluconeogenesis. It participates in carbohydrate degradation; glycolysis; D-glyceraldehyde 3-phosphate and glycerone phosphate from D-glucose: step 2/4. Its function is as follows. Catalyzes the reversible isomerization of glucose-6-phosphate to fructose-6-phosphate. This Thermus thermophilus (strain ATCC BAA-163 / DSM 7039 / HB27) protein is Glucose-6-phosphate isomerase.